A 426-amino-acid chain; its full sequence is Dihydrofolate synthase/folylpolyglutamate synthase (426 aa).

ATP is bound at residue 58–61; the sequence is GKGS. A Mg(2+)-binding site is contributed by S82. 7,8-dihydropteroate is bound at residue 121-124; sequence TRFE. E145 contributes to the Mg(2+) binding site. Position 152–154 (152–154) interacts with 7,8-dihydropteroate; that stretch reads LDA. A Mg(2+)-binding site is contributed by H172. The ATP site is built by R289 and D302.

It belongs to the folylpolyglutamate synthase family. In terms of assembly, monomer. The cofactor is Mg(2+).

It catalyses the reaction 7,8-dihydropteroate + L-glutamate + ATP = 7,8-dihydrofolate + ADP + phosphate + H(+). It carries out the reaction (6S)-5,6,7,8-tetrahydrofolyl-(gamma-L-Glu)(n) + L-glutamate + ATP = (6S)-5,6,7,8-tetrahydrofolyl-(gamma-L-Glu)(n+1) + ADP + phosphate + H(+). The enzyme catalyses 10-formyltetrahydrofolyl-(gamma-L-Glu)(n) + L-glutamate + ATP = 10-formyltetrahydrofolyl-(gamma-L-Glu)(n+1) + ADP + phosphate + H(+). The catalysed reaction is (6R)-5,10-methylenetetrahydrofolyl-(gamma-L-Glu)(n) + L-glutamate + ATP = (6R)-5,10-methylenetetrahydrofolyl-(gamma-L-Glu)(n+1) + ADP + phosphate + H(+). It functions in the pathway cofactor biosynthesis; tetrahydrofolate biosynthesis; 7,8-dihydrofolate from 2-amino-4-hydroxy-6-hydroxymethyl-7,8-dihydropteridine diphosphate and 4-aminobenzoate: step 2/2. The protein operates within cofactor biosynthesis; tetrahydrofolylpolyglutamate biosynthesis. Its function is as follows. Functions in two distinct reactions of the de novo folate biosynthetic pathway. Catalyzes the addition of a glutamate residue to dihydropteroate (7,8-dihydropteroate or H2Pte) to form dihydrofolate (7,8-dihydrofolate monoglutamate or H2Pte-Glu). Also catalyzes successive additions of L-glutamate to tetrahydrofolate or 10-formyltetrahydrofolate or 5,10-methylenetetrahydrofolate, leading to folylpolyglutamate derivatives. The chain is Dihydrofolate synthase/folylpolyglutamate synthase (folC) from Buchnera aphidicola subsp. Baizongia pistaciae (strain Bp).